We begin with the raw amino-acid sequence, 75 residues long: Lipid-anchored plasma membrane protein CPP2 (75 aa).

A disordered region spans residues 1-43; it reads MSQQQGYYQQGPPQQGYYQQGPPQQGYYQQGPPQQGYPQQQPV. A run of 3 repeats spans residues 4-13, 14-23, and 24-33. Positions 4 to 33 are 3 X 10 AA tandem repeats of Q-Q-G-Y-Y-Q-Q-G-P-P; the sequence is QQGYYQQGPPQQGYYQQGPPQQGYYQQGPP.

It belongs to the CYSTM1 family. In terms of processing, palmitoylated near the C-terminus.

The protein resides in the cell membrane. This chain is Lipid-anchored plasma membrane protein CPP2, found in Saccharomyces cerevisiae (strain ATCC 204508 / S288c) (Baker's yeast).